We begin with the raw amino-acid sequence, 329 residues long: MVRLTVHLIAKLGSHSKSSRSESFQQYLRKLTHLNFSDKNIEEIDDLSVCRNLTVLYLYDNQISQICNLGFASNLTHLYMQNNNISCIENLSSLHKLSKLFLGGNSITVVEGLEELKSLKELHVEGQKLPCGEKLAFDPHSISSLSETLCILNISKNNIDELWDLAPLRKMTHLFAADNQLHDIQELETVFSQWFKLRLLDLSRNPVCHKPKYRDRLITVCKFLDDLDGKQINELSRQFLINWKASKDAKKKPEDGKDNKLQVANQLSTSADFHLGPQHPSVRERSSSLSKPSENEKPGVTFRTDQIQADSRGRGTRGDSSTEWQSLKI.

LRR repeat units follow at residues 30–51 (KLTHLNFSDKNIEEIDDLSVCR), 52–73 (NLTVLYLYDNQISQICNLGFAS), 74–95 (NLTHLYMQNNNISCIENLSSLH), 96–117 (KLSKLFLGGNSITVVEGLEELK), 118–139 (SLKELHVEGQKLPCGEKLAFDP), 148–169 (TLCILNISKNNIDELWDLAPLR), and 170–191 (KMTHLFAADNQLHDIQELETVF). Residues 205 to 243 (NPVCHKPKYRDRLITVCKFLDDLDGKQINELSRQFLINW) enclose the LRRCT domain. The disordered stretch occupies residues 268–329 (STSADFHLGP…SSTEWQSLKI (62 aa)). The segment covering 318–329 (GDSSTEWQSLKI) has biased composition (polar residues).

It is found in the cytoplasm. The protein resides in the cytoskeleton. It localises to the microtubule organizing center. Its subcellular location is the centrosome. May regulate phosphatase activity of protein phosphatase 1 (PP1) complexes. This Danio rerio (Zebrafish) protein is Protein phosphatase 1 regulatory subunit 42 (ppp1r42).